The sequence spans 317 residues: Metaxin-1 (317 aa).

Residues Lys-38, Lys-41, and Lys-78 each participate in a glycyl lysine isopeptide (Lys-Gly) (interchain with G-Cter in ubiquitin) cross-link. The chain crosses the membrane as a helical span at residues 164 to 184 (EELEKELYQEAQECLTLLSQR).

The protein belongs to the metaxin family. Interacts with MTX2/metaxin-2. Associates with the mitochondrial contact site and cristae organizing system (MICOS) complex, composed of at least MICOS10/MIC10, CHCHD3/MIC19, CHCHD6/MIC25, APOOL/MIC27, IMMT/MIC60, APOO/MIC23/MIC26 and QIL1/MIC13. This complex was also known under the names MINOS or MitOS complex. The MICOS complex associates with mitochondrial outer membrane proteins SAMM50, MTX1 and MTX2 (together described as components of the mitochondrial outer membrane sorting assembly machinery (SAM) complex) and DNAJC11, mitochondrial inner membrane protein TMEM11 and with HSPA9. The MICOS and SAM complexes together with DNAJC11 are part of a large protein complex spanning both membranes termed the mitochondrial intermembrane space bridging (MIB) complex. Interacts with ARMC1. Ubiquitinated by PRKN during mitophagy, leading to its degradation and enhancement of mitophagy. Deubiquitinated by USP30.

It localises to the mitochondrion outer membrane. Its function is as follows. Involved in transport of proteins into the mitochondrion. Essential for embryonic development. In Bos taurus (Bovine), this protein is Metaxin-1 (MTX1).